Consider the following 256-residue polypeptide: 5-oxoprolinase subunit A (256 aa).

The protein belongs to the LamB/PxpA family. In terms of assembly, forms a complex composed of PxpA, PxpB and PxpC.

It catalyses the reaction 5-oxo-L-proline + ATP + 2 H2O = L-glutamate + ADP + phosphate + H(+). In terms of biological role, catalyzes the cleavage of 5-oxoproline to form L-glutamate coupled to the hydrolysis of ATP to ADP and inorganic phosphate. The chain is 5-oxoprolinase subunit A from Geobacillus thermodenitrificans (strain NG80-2).